Consider the following 508-residue polypeptide: Photosystem II CP47 reaction center protein (508 aa).

A run of 6 helical transmembrane segments spans residues Ala-21–Ser-36, Ile-101–Trp-115, Gly-140–Phe-156, Ile-203–Ser-218, Val-237–Val-252, and Ser-457–Arg-472.

The protein belongs to the PsbB/PsbC family. PsbB subfamily. In terms of assembly, PSII is composed of 1 copy each of membrane proteins PsbA, PsbB, PsbC, PsbD, PsbE, PsbF, PsbH, PsbI, PsbJ, PsbK, PsbL, PsbM, PsbT, PsbX, PsbY, PsbZ, Psb30/Ycf12, at least 3 peripheral proteins of the oxygen-evolving complex and a large number of cofactors. It forms dimeric complexes. The cofactor is Binds multiple chlorophylls. PSII binds additional chlorophylls, carotenoids and specific lipids..

It localises to the plastid. It is found in the chloroplast thylakoid membrane. Its function is as follows. One of the components of the core complex of photosystem II (PSII). It binds chlorophyll and helps catalyze the primary light-induced photochemical processes of PSII. PSII is a light-driven water:plastoquinone oxidoreductase, using light energy to abstract electrons from H(2)O, generating O(2) and a proton gradient subsequently used for ATP formation. This chain is Photosystem II CP47 reaction center protein, found in Daucus carota (Wild carrot).